The following is a 416-amino-acid chain: Leu/Ile/Val-binding protein homolog 4 (416 aa).

An N-terminal signal peptide occupies residues 1–26; the sequence is MSLKVFLQAGVACAALSLAGAAGASA.

It belongs to the leucine-binding protein family.

Functionally, component of an amino-acid transport system. In Brucella melitensis biotype 1 (strain ATCC 23456 / CCUG 17765 / NCTC 10094 / 16M), this protein is Leu/Ile/Val-binding protein homolog 4.